Here is a 349-residue protein sequence, read N- to C-terminus: Cobalt-precorrin-5B C(1)-methyltransferase (349 aa).

The protein belongs to the CbiD family.

It catalyses the reaction Co-precorrin-5B + S-adenosyl-L-methionine = Co-precorrin-6A + S-adenosyl-L-homocysteine. Its pathway is cofactor biosynthesis; adenosylcobalamin biosynthesis; cob(II)yrinate a,c-diamide from sirohydrochlorin (anaerobic route): step 6/10. Its function is as follows. Catalyzes the methylation of C-1 in cobalt-precorrin-5B to form cobalt-precorrin-6A. In Saccharolobus islandicus (strain L.S.2.15 / Lassen #1) (Sulfolobus islandicus), this protein is Cobalt-precorrin-5B C(1)-methyltransferase.